The chain runs to 675 residues: Vitamin K-dependent protein S (675 aa).

A signal peptide spans 1–24 (MRVLGGRTGTLLACLALVLPVLEA). The propeptide occupies 25-41 (NFLSRQHASQVLIRRRR). The Gla domain occupies 42-87 (ANTLLEETKKGNLERECIEELCNKEEAREIFENNPETEYFYPKYLG). Residues Glu47, Glu48, Glu55, Glu57, Glu60, Glu61, Glu66, Glu67, Glu70, Glu73, and Glu77 each carry the 4-carboxyglutamate modification. Cys58 and Cys63 are disulfide-bonded. 16 disulfide bridges follow: Cys88–Cys113, Cys121–Cys134, Cys126–Cys143, Cys145–Cys154, Cys161–Cys175, Cys171–Cys184, Cys186–Cys199, Cys205–Cys217, Cys212–Cys226, Cys228–Cys241, Cys247–Cys256, Cys252–Cys265, Cys267–Cys282, Cys288–Cys567, Cys449–Cys475, and Cys638–Cys665. The interval 88–116 (CLGSFRAGLFTAARLSTNAYPDLRSCVNA) is thrombin-sensitive. One can recognise an EGF-like 1 domain in the interval 117 to 155 (ISDQCNPLPCNEDGFMTCKDGQATFTCICKSGWQGEKCE). The residue at position 136 (Asp136) is a (3R)-3-hydroxyaspartate. Residues 157-200 (DINECKDPVNINGGCSQICENTPGSYHCSCKNGFVMLSNKKDCK) form the EGF-like 2; calcium-binding domain. Asn177 carries the (3R)-3-hydroxyasparagine modification. The region spanning 201-242 (DVDECVLKPSICGTAVCKNIPGDFECECAEGYKYNPVSKSCD) is the EGF-like 3; calcium-binding domain. Asn219 is modified ((3R)-3-hydroxyasparagine). The EGF-like 4; calcium-binding domain maps to 243–283 (DVDECAENLCAQLCVNYPGGYSCYCDGKKGFKLAQDQKSCE). (3R)-3-hydroxyasparagine is present on Asn258. Laminin G-like domains follow at residues 299 to 475 (LLYL…NKHC) and 484 to 665 (YYPG…AHSC). Residues Asn499 and Asn509 are each glycosylated (N-linked (GlcNAc...) asparagine).

Post-translationally, the iron and 2-oxoglutarate dependent 3-hydroxylation of aspartate and asparagine is (R) stereospecific within EGF domains. As to expression, plasma.

It is found in the secreted. In terms of biological role, anticoagulant plasma protein; it is a cofactor to activated protein C in the degradation of coagulation factors Va and VIIIa. It helps to prevent coagulation and stimulating fibrinolysis. This Bos taurus (Bovine) protein is Vitamin K-dependent protein S (PROS1).